The sequence spans 342 residues: Phosphate acyltransferase (342 aa).

Belongs to the PlsX family. As to quaternary structure, homodimer. Probably interacts with PlsY.

The protein resides in the cytoplasm. The enzyme catalyses a fatty acyl-[ACP] + phosphate = an acyl phosphate + holo-[ACP]. It participates in lipid metabolism; phospholipid metabolism. Its function is as follows. Catalyzes the reversible formation of acyl-phosphate (acyl-PO(4)) from acyl-[acyl-carrier-protein] (acyl-ACP). This enzyme utilizes acyl-ACP as fatty acyl donor, but not acyl-CoA. This Shewanella loihica (strain ATCC BAA-1088 / PV-4) protein is Phosphate acyltransferase.